The primary structure comprises 294 residues: NADH-cytochrome b5 reductase 1 (294 aa).

The chain crosses the membrane as a helical span at residues 13 to 33 (PHASFLGGLVVAAILGLFIFF). The FAD-binding FR-type domain occupies 44–147 (VEWRSFKLVD…KGPKGKFVYT (104 aa)). FAD-binding positions include 127–142 (SLLT…GPKG) and 153–185 (HLVM…RLSL).

The protein belongs to the flavoprotein pyridine nucleotide cytochrome reductase family. Monomer. Component of the 2-(3-amino-3-carboxypropyl)histidine synthase complex composed of DPH1, DPH2, DPH3 and a NADH-dependent reductase, predominantly CBR1. FAD serves as cofactor.

It localises to the mitochondrion outer membrane. It carries out the reaction 2 Fe(III)-[cytochrome b5] + NADH = 2 Fe(II)-[cytochrome b5] + NAD(+) + H(+). The enzyme catalyses 2 Fe(3+)-[Dph3] + NADH = 2 Fe(2+)-[Dph3] + NAD(+) + H(+). The protein operates within protein modification; peptidyl-diphthamide biosynthesis. In terms of biological role, NADH-dependent reductase for DPH3 and cytochrome b5. Required for the first step of diphthamide biosynthesis, a post-translational modification of histidine which occurs in elongation factor 2. DPH1 and DPH2 transfer a 3-amino-3-carboxypropyl (ACP) group from S-adenosyl-L-methionine (SAM) to a histidine residue, the reaction is assisted by a reduction system comprising DPH3 and a NADH-dependent reductase, predominantly CBR1. By reducing DPH3, also involved in the formation of the tRNA wobble base modification mcm5s 2U (5-methoxycarbonylmethyl-2-thiouridine), mediated by the elongator complex. The cytochrome b5/NADH cytochrome b5 reductase electron transfer system supports the catalytic activity of several sterol biosynthetic enzymes. This is NADH-cytochrome b5 reductase 1 (CBR1) from Cryptococcus neoformans var. neoformans serotype D (strain B-3501A) (Filobasidiella neoformans).